Reading from the N-terminus, the 110-residue chain is NADH-quinone oxidoreductase subunit K (110 aa).

3 helical membrane-spanning segments follow: residues 13–33, 41–61, and 73–93; these read LNHY…GLFM, ILMS…AFSI, and IIIL…LLIY.

It belongs to the complex I subunit 4L family. In terms of assembly, NDH-1 is composed of 14 different subunits. Subunits NuoA, H, J, K, L, M, N constitute the membrane sector of the complex.

Its subcellular location is the cell inner membrane. The enzyme catalyses a quinone + NADH + 5 H(+)(in) = a quinol + NAD(+) + 4 H(+)(out). Functionally, NDH-1 shuttles electrons from NADH, via FMN and iron-sulfur (Fe-S) centers, to quinones in the respiratory chain. The immediate electron acceptor for the enzyme in this species is believed to be ubiquinone. Couples the redox reaction to proton translocation (for every two electrons transferred, four hydrogen ions are translocated across the cytoplasmic membrane), and thus conserves the redox energy in a proton gradient. This is NADH-quinone oxidoreductase subunit K from Rickettsia conorii (strain ATCC VR-613 / Malish 7).